Consider the following 60-residue polypeptide: Putative transmembrane protein 74 (60 aa).

The next 2 helical transmembrane spans lie at 4 to 24 (FSVIMYLINSVIFTFMIFLTF) and 35 to 55 (WVYILIGFFTAIVFHSGYQAG).

The protein resides in the host membrane. The polypeptide is Putative transmembrane protein 74 (SIFV0074) (Sulfolobus islandicus filamentous virus (isolate Iceland/Hveragerdi) (SIFV)).